A 261-amino-acid chain; its full sequence is Cytochrome c oxidase subunit 3 (261 aa).

Over 1-15 (MTHQTHAYHMVNPSP) the chain is Mitochondrial matrix. The chain crosses the membrane as a helical span at residues 16 to 34 (WPLTGALSALLMTSGLIMW). Residues 35–40 (FHFNST) lie on the Mitochondrial intermembrane side of the membrane. A helical transmembrane segment spans residues 41–66 (TLLMLGLTTNMLTMYQWWRDIIREST). Topologically, residues 67 to 72 (FQGHHT) are mitochondrial matrix. The chain crosses the membrane as a helical span at residues 73 to 105 (PNVQKGLRYGMILFIISEVLFFTGFFWAFYHSS). Residues 106 to 128 (LAPTPELGGCWPPTGIHPLNPLE) are Mitochondrial intermembrane-facing. A helical transmembrane segment spans residues 129-152 (VPLLNTSVLLASGVSITWAHHSLM). Topologically, residues 153–155 (EGN) are mitochondrial matrix. Residues 156 to 183 (RNHMLQALFITIALGVYFTLLQASEYYE) traverse the membrane as a helical segment. Residues 184–190 (APFTISD) are Mitochondrial intermembrane-facing. Residues 191–223 (GVYGSTFFVATGFHGLHVIIGSTFLIVCFFRQL) form a helical membrane-spanning segment. The Mitochondrial matrix segment spans residues 224–232 (KFHFTSSHH). A helical membrane pass occupies residues 233-256 (FGFEAAAWYWHFVDVVWLFLYVSI). At 257 to 261 (YWWGS) the chain is on the mitochondrial intermembrane side.

It belongs to the cytochrome c oxidase subunit 3 family. As to quaternary structure, component of the cytochrome c oxidase (complex IV, CIV), a multisubunit enzyme composed of 14 subunits. The complex is composed of a catalytic core of 3 subunits MT-CO1, MT-CO2 and MT-CO3, encoded in the mitochondrial DNA, and 11 supernumerary subunits COX4I, COX5A, COX5B, COX6A, COX6B, COX6C, COX7A, COX7B, COX7C, COX8 and NDUFA4, which are encoded in the nuclear genome. The complex exists as a monomer or a dimer and forms supercomplexes (SCs) in the inner mitochondrial membrane with NADH-ubiquinone oxidoreductase (complex I, CI) and ubiquinol-cytochrome c oxidoreductase (cytochrome b-c1 complex, complex III, CIII), resulting in different assemblies (supercomplex SCI(1)III(2)IV(1) and megacomplex MCI(2)III(2)IV(2)).

The protein localises to the mitochondrion inner membrane. The catalysed reaction is 4 Fe(II)-[cytochrome c] + O2 + 8 H(+)(in) = 4 Fe(III)-[cytochrome c] + 2 H2O + 4 H(+)(out). In terms of biological role, component of the cytochrome c oxidase, the last enzyme in the mitochondrial electron transport chain which drives oxidative phosphorylation. The respiratory chain contains 3 multisubunit complexes succinate dehydrogenase (complex II, CII), ubiquinol-cytochrome c oxidoreductase (cytochrome b-c1 complex, complex III, CIII) and cytochrome c oxidase (complex IV, CIV), that cooperate to transfer electrons derived from NADH and succinate to molecular oxygen, creating an electrochemical gradient over the inner membrane that drives transmembrane transport and the ATP synthase. Cytochrome c oxidase is the component of the respiratory chain that catalyzes the reduction of oxygen to water. Electrons originating from reduced cytochrome c in the intermembrane space (IMS) are transferred via the dinuclear copper A center (CU(A)) of subunit 2 and heme A of subunit 1 to the active site in subunit 1, a binuclear center (BNC) formed by heme A3 and copper B (CU(B)). The BNC reduces molecular oxygen to 2 water molecules using 4 electrons from cytochrome c in the IMS and 4 protons from the mitochondrial matrix. This Litocranius walleri (Gerenuk) protein is Cytochrome c oxidase subunit 3 (MT-CO3).